Here is a 151-residue protein sequence, read N- to C-terminus: UPF0719 transmembrane protein MAP_1032c (151 aa).

Helical transmembrane passes span 20 to 40 (VATI…FYAV), 60 to 80 (AVVV…TAIA), 90 to 110 (LVGV…ALLA), and 130 to 150 (PGSF…AAAV).

The protein belongs to the UPF0719 family.

Its subcellular location is the cell membrane. This Mycolicibacterium paratuberculosis (strain ATCC BAA-968 / K-10) (Mycobacterium paratuberculosis) protein is UPF0719 transmembrane protein MAP_1032c.